The following is an 872-amino-acid chain: MAEMEKEGRPPENKRSRKPAHPVKREINEEMKNFAENTMNELLGWYGYDKVELKDGEDIEFRSYPTDGESRQHISVLKENSLPKPKLPEDSVISPYNISTGYSGLATGNGLSDSPAGSKDHGNVPIIVPLIPPPFIKPPAEDDVSNVQIMCAWCQKVGIKRYSLSMGSEVKSFCSEKCFAACRRAYFKRNKARDEDGHAENFPQQHYAKETPRLAFKNNCELLVCDWCKHIRHTKEYLDFGDGERRLQFCSAKCLNQYKMDIFYKETQANLPAGLCSTLHPPMENKTEGTGVQLLTPDSWNIPLTDARRKAPSPVAAAGQSQGPGPSASTTVSPSDTANCSVTKIPTPVPKSMPISETPNIPPVSVQPPASIGPPLGVPPRSPPMVMTNRGPVPLPIFMEQQIMQQLRPPFIRGPPHHASNPNSPLSNPMLPGIGPPPGGPRNLGPTSSPMHRPLLSPHIHPPSTPTMPGNPPGLLPPPPPGAPLPSLPFPPVSMMPNGPMPVPQMMNFGLPSLAPLVPPPTLLVPYPVIVPLPVPIPIPIPVPHVSDSKPPNGFSSNGENFIPSAPGDSSAAGGKPGGHSLSPRDSKQGSSKSADSPPGCSGQALSLAPAPAEHGRSEVVDLTRRAGSPPGAGGQLGFPGGVLQGPQDGVIDLTVGHRARLHNVIHRALHAHVKAEREPGAAERRTCGGCRDGHCSPPAAGDPGPGAPAGPEAAAACNVIVNGTRGAAEGAKGAEPPPEQPPPPPPPPPAPPKKLLSPEEPAVSELESVKENNCASNCHLDGEAAKKLMGEEALAGGDKSDPNLNNPADEDHAYALRMLPKTGCVIQPVPKPAEKAAMAPCIISSPMLSAGPEDLEPPLKRRCLRIRNQNK.

Over residues 1–14 (MAEMEKEGRPPENK) the composition is skewed to basic and acidic residues. The disordered stretch occupies residues 1-26 (MAEMEKEGRPPENKRSRKPAHPVKRE). 2 consecutive FCS-type zinc fingers follow at residues 142-180 (DDVSNVQIMCAWCQKVGIKRYSLSMGSEVKSFCSEKCFA) and 216-256 (FKNN…KCLN). 3 disordered regions span residues 308 to 354 (RRKA…KSMP), 411 to 484 (FIRG…PGAP), and 550 to 619 (KPPN…GRSE). Positions 319-344 (GQSQGPGPSASTTVSPSDTANCSVTK) are enriched in polar residues. The segment covering 417 to 433 (HHASNPNSPLSNPMLPG) has biased composition (low complexity). The span at 460 to 484 (IHPPSTPTMPGNPPGLLPPPPPGAP) shows a compositional bias: pro residues. The short motif at 620–624 (VVDLT) is the SUMO interaction motif 1 (SIM); mediates the binding to polysumoylated substrates element. Ser629 bears the Phosphoserine mark. Residues 651–655 (VIDLT) carry the SUMO interaction motif 2 (SIM); mediates the binding to polysumoylated substrates motif. Lys675 is covalently cross-linked (Glycyl lysine isopeptide (Lys-Gly) (interchain with G-Cter in SUMO2)). Ser697 is modified (phosphoserine). Residues 728–770 (AAEGAKGAEPPPEQPPPPPPPPPAPPKKLLSPEEPAVSELESV) form a disordered region. Positions 736 to 753 (EPPPEQPPPPPPPPPAPP) are enriched in pro residues.

Belongs to the SOBP family. Interacts (via SIM domains) with SUMO1 and SUMO2.

Functionally, implicated in development of the cochlea. The sequence is that of Sine oculis-binding protein homolog from Bos taurus (Bovine).